The chain runs to 490 residues: Acetyl-coenzyme A carboxylase carboxyl transferase subunit beta, chloroplastic (490 aa).

The interval 184–203 (LNSSENEGSSRRTRTKGSDL) is disordered. The CoA carboxyltransferase N-terminal domain maps to 221–490 (LWVQCENCYG…PLNQKSSKIK (270 aa)). Positions 225, 228, 244, and 247 each coordinate Zn(2+). The C4-type zinc-finger motif lies at 225 to 247 (CENCYGLNYKKFLKSKMNICEQC).

It belongs to the AccD/PCCB family. As to quaternary structure, acetyl-CoA carboxylase is a heterohexamer composed of biotin carboxyl carrier protein, biotin carboxylase and 2 subunits each of ACCase subunit alpha and ACCase plastid-coded subunit beta (accD). Zn(2+) serves as cofactor.

It localises to the plastid. Its subcellular location is the chloroplast stroma. It carries out the reaction N(6)-carboxybiotinyl-L-lysyl-[protein] + acetyl-CoA = N(6)-biotinyl-L-lysyl-[protein] + malonyl-CoA. It functions in the pathway lipid metabolism; malonyl-CoA biosynthesis; malonyl-CoA from acetyl-CoA: step 1/1. Functionally, component of the acetyl coenzyme A carboxylase (ACC) complex. Biotin carboxylase (BC) catalyzes the carboxylation of biotin on its carrier protein (BCCP) and then the CO(2) group is transferred by the transcarboxylase to acetyl-CoA to form malonyl-CoA. The chain is Acetyl-coenzyme A carboxylase carboxyl transferase subunit beta, chloroplastic from Solanum bulbocastanum (Wild potato).